Consider the following 1480-residue polypeptide: Cystic fibrosis transmembrane conductance regulator (1480 aa).

The Cytoplasmic segment spans residues 1 to 77 (MQRSPLEKAS…KLINALRRCF (77 aa)). A helical transmembrane segment spans residues 78–98 (FWRFMFYGIFLYLGEVTKAVQ). Positions 81-365 (FMFYGIFLYL…WAVQTWYDSL (285 aa)) constitute an ABC transmembrane type-1 1 domain. Residues 99–122 (PLLLGRIIASYDPDNKEERSIAIY) are Extracellular-facing. Residues 123–146 (LGIGLCLLFIVRTLLLHPAIFGLH) form a helical membrane-spanning segment. The Cytoplasmic segment spans residues 147–195 (HIGMQMRIAMFSLIYKKTLKLSSRVLDKISIGQLVSLLSNNLNKFDEGL). Residues 196–216 (ALAHFVWIAPLQVALLMGLIW) form a helical membrane-spanning segment. At 217–222 (ELLQAS) the chain is on the extracellular side. The helical transmembrane segment at 223-243 (AFCGLGFLIVLALFQAGLGRM) threads the bilayer. At 244–298 (MMKYRDQRAGKISERLVITSEMIENIQSVKAYCWEEAMEKMIENLRQTELKLTRK) the chain is on the cytoplasmic side. Residues 299-319 (AAYVRYFNSSAFFFSGFFVVF) form a helical membrane-spanning segment. Residues 320–339 (LSVLPYALIKGIILRKIFTT) are Extracellular-facing. Residues 340 to 358 (ISFCIVLRMAVTRQFPWAV) traverse the membrane as a helical segment. At 359–858 (QTWYDSLGAI…YLRYITVHKS (500 aa)) the chain is on the cytoplasmic side. Residues tryptophan 401, serine 434, 458–465 (GSTGAGKT), and glutamine 493 each bind ATP. One can recognise an ABC transporter 1 domain in the interval 423-646 (NGDDSLFFSN…QPDFSSKLMG (224 aa)). Cysteine 524 is lipidated: S-palmitoyl cysteine. Serine 549 carries the phosphoserine modification. The tract at residues 654–831 (SAERRNSILT…EEINEEDLKE (178 aa)) is disordered R region. Serine 660 and serine 670 each carry phosphoserine; by PKA. Serine 686 carries the phosphoserine; by PKC modification. Lysine 688 participates in a covalent cross-link: Glycyl lysine isopeptide (Lys-Gly) (interchain with G-Cter in ubiquitin). Phosphoserine; by PKA occurs at positions 700 and 712. Threonine 717 is subject to Phosphothreonine. Serine 737, serine 753, and serine 768 each carry phosphoserine; by PKA. A Phosphoserine; by PKC modification is found at serine 790. Phosphoserine; by PKA occurs at positions 795 and 813. The helical transmembrane segment at 859 to 879 (LIFVLIWCLVIFLAEVAASLV) threads the bilayer. The ABC transmembrane type-1 2 domain occupies 859-1155 (LIFVLIWCLV…AVNSSIDVDS (297 aa)). At 880–918 (VLWLLGNTPLQDKGNSTHSRNNSYAVIITSTSSYYVFYI) the chain is on the extracellular side. 2 N-linked (GlcNAc...) asparagine glycosylation sites follow: asparagine 894 and asparagine 900. The discontinuously helical transmembrane segment at 919 to 939 (YVGVADTLLAMGFFRGLPLVH) threads the bilayer. The Cytoplasmic portion of the chain corresponds to 940 to 990 (TLITVSKILHHKMLHSVLQAPMSTLNTLKAGGILNRFSKDIAILDDLLPLT). Residues 991 to 1011 (IFDFIQLLLIVIGAIAVVAVL) traverse the membrane as a helical segment. The Extracellular segment spans residues 1012–1013 (QP). The helical transmembrane segment at 1014-1034 (YIFVATVPVIVAFIMLRAYFL) threads the bilayer. Residues 1035 to 1095 (QTSQQLKQLE…TANWFLYLST (61 aa)) are Cytoplasmic-facing. A helical membrane pass occupies residues 1096–1116 (LRWFQMRIEMIFVIFFIAVTF). Residues 1117–1130 (ISILTTGEGEGRVG) are Extracellular-facing. The helical transmembrane segment at 1131–1151 (IILTLAMNIMSTLQWAVNSSI) threads the bilayer. At 1152–1480 (DVDSLMRSVS…TEEEVQDTRL (329 aa)) the chain is on the cytoplasmic side. In terms of domain architecture, ABC transporter 2 spans 1210–1443 (MTVKDLTAKY…RSLFRQAISP (234 aa)). Residues tyrosine 1219 and 1244 to 1251 (GRTGSGKS) contribute to the ATP site. Residues 1386–1480 (RTLKQAFADC…TEEEVQDTRL (95 aa)) are interaction with GORASP2. Cysteine 1395 carries S-palmitoyl cysteine lipidation. Phosphoserine is present on residues serine 1444 and serine 1456. Residues 1452–1480 (HRNSSKCKSKPQIAALKEETEEEVQDTRL) form a disordered region. The span at 1470 to 1480 (ETEEEVQDTRL) shows a compositional bias: acidic residues. A PDZ-binding motif is present at residues 1478-1480 (TRL).

The protein belongs to the ABC transporter superfamily. ABCC family. CFTR transporter (TC 3.A.1.202) subfamily. As to quaternary structure, monomer; does not require oligomerization for channel activity. May form oligomers in the membrane. Interacts with SLC26A3, SLC26A6 and SHANK2. Interacts with NHERF1 and MYO6. Interacts (via C-terminus) with GOPC (via PDZ domain); this promotes CFTR internalization and thereby decreases channel activity. Interacts with SLC4A7 through NHERF1. Found in a complex with MYO5B and RAB11A. Interacts with ANO1. Interacts with SLC26A8. Interacts with AHCYL1; the interaction increases CFTR activity. Interacts with CSE1L. The core-glycosylated form interacts with GORASP2 (via PDZ GRASP-type 1 domain) in respone to ER stress. Interacts with MARCHF2; the interaction leads to CFTR ubiqtuitination and degradation. Interacts with ADGRG2. Post-translationally, N-glycosylated. Phosphorylated; cAMP treatment promotes phosphorylation and activates the channel. Dephosphorylation decreases the ATPase activity (in vitro). Phosphorylation at PKA sites activates the channel. Phosphorylation at PKC sites enhances the response to phosphorylation by PKA. Phosphorylated by AMPK; this inhibits channel activity. In terms of processing, ubiquitinated, leading to its degradation in the lysosome. Deubiquitination by USP10 in early endosomes enhances its endocytic recycling to the cell membrane. Ubiquitinated by RNF185 during ER stress. Ubiquitinated by MARCHF2. Expressed in the respiratory airway, including bronchial epithelium, and in the female reproductive tract, including oviduct (at protein level). Detected in pancreatic intercalated ducts in the exocrine tissue, on epithelial cells in intralobular striated ducts in sublingual salivary glands, on apical membranes of crypt cells throughout the small and large intestine, and on the reabsorptive duct in eccrine sweat glands. Detected on the equatorial segment of the sperm head (at protein level). Detected in nasal and bronchial superficial epithelium. Expressed by the central cells on the sebaceous glands, dermal adipocytes and, at lower levels, by epithelial cells.

The protein resides in the apical cell membrane. Its subcellular location is the early endosome membrane. It is found in the cell membrane. The protein localises to the recycling endosome membrane. It localises to the endoplasmic reticulum membrane. The protein resides in the nucleus. It catalyses the reaction ATP + H2O + closed Cl(-) channel = ADP + phosphate + open Cl(-) channel.. It carries out the reaction chloride(in) = chloride(out). The catalysed reaction is hydrogencarbonate(in) = hydrogencarbonate(out). The enzyme catalyses ATP + H2O = ADP + phosphate + H(+). In terms of biological role, epithelial ion channel that plays an important role in the regulation of epithelial ion and water transport and fluid homeostasis. Mediates the transport of chloride ions across the cell membrane. Possesses an intrinsic ATPase activity and utilizes ATP to gate its channel; the passive flow of anions through the channel is gated by cycles of ATP binding and hydrolysis by the ATP-binding domains. The ion channel is also permeable to HCO(3)(-); selectivity depends on the extracellular chloride concentration. In vitro, mediates ATP-dependent glutathione flux. Exerts its function also by modulating the activity of other ion channels and transporters. Plays an important role in airway fluid homeostasis. Contributes to the regulation of the pH and the ion content of the airway surface fluid layer and thereby plays an important role in defense against pathogens. Modulates the activity of the epithelial sodium channel (ENaC) complex, in part by regulating the cell surface expression of the ENaC complex. Inhibits the activity of the ENaC channel containing subunits SCNN1A, SCNN1B and SCNN1G. Inhibits the activity of the ENaC channel containing subunits SCNN1D, SCNN1B and SCNN1G, but not of the ENaC channel containing subunits SCNN1A, SCNN1B and SCNN1G. May regulate bicarbonate secretion and salvage in epithelial cells by regulating the transporter SLC4A7. Can inhibit the chloride channel activity of ANO1. Plays a role in the chloride and bicarbonate homeostasis during sperm epididymal maturation and capacitation. The protein is Cystic fibrosis transmembrane conductance regulator of Homo sapiens (Human).